Reading from the N-terminus, the 488-residue chain is Ribulose bisphosphate carboxylase large chain (488 aa).

Asparagine 127 and threonine 177 together coordinate substrate. The active-site Proton acceptor is the lysine 179. Position 181 (lysine 181) interacts with substrate. Positions 205, 207, and 208 each coordinate Mg(2+). Lysine 205 bears the N6-carboxylysine mark. The active-site Proton acceptor is the histidine 297. 3 residues coordinate substrate: arginine 298, histidine 330, and serine 382.

It belongs to the RuBisCO large chain family. Type I subfamily. As to quaternary structure, heterohexadecamer of 8 large chains and 8 small chains. The cofactor is Mg(2+).

It localises to the plastid. The protein resides in the chloroplast. The catalysed reaction is 2 (2R)-3-phosphoglycerate + 2 H(+) = D-ribulose 1,5-bisphosphate + CO2 + H2O. It catalyses the reaction D-ribulose 1,5-bisphosphate + O2 = 2-phosphoglycolate + (2R)-3-phosphoglycerate + 2 H(+). Functionally, ruBisCO catalyzes two reactions: the carboxylation of D-ribulose 1,5-bisphosphate, the primary event in carbon dioxide fixation, as well as the oxidative fragmentation of the pentose substrate in the photorespiration process. Both reactions occur simultaneously and in competition at the same active site. The protein is Ribulose bisphosphate carboxylase large chain of Pyropia suborbiculata (Red alga).